We begin with the raw amino-acid sequence, 361 residues long: S-adenosylmethionine:tRNA ribosyltransferase-isomerase (361 aa).

This sequence belongs to the QueA family. As to quaternary structure, monomer.

It is found in the cytoplasm. It catalyses the reaction 7-aminomethyl-7-carbaguanosine(34) in tRNA + S-adenosyl-L-methionine = epoxyqueuosine(34) in tRNA + adenine + L-methionine + 2 H(+). It participates in tRNA modification; tRNA-queuosine biosynthesis. In terms of biological role, transfers and isomerizes the ribose moiety from AdoMet to the 7-aminomethyl group of 7-deazaguanine (preQ1-tRNA) to give epoxyqueuosine (oQ-tRNA). This is S-adenosylmethionine:tRNA ribosyltransferase-isomerase from Glaesserella parasuis serovar 5 (strain SH0165) (Haemophilus parasuis).